A 491-amino-acid polypeptide reads, in one-letter code: Glutamyl-tRNA(Gln) amidotransferase subunit A (491 aa).

Active-site charge relay system residues include Lys77 and Ser152. The Acyl-ester intermediate role is filled by Ser176.

The protein belongs to the amidase family. GatA subfamily. As to quaternary structure, heterotrimer of A, B and C subunits.

The catalysed reaction is L-glutamyl-tRNA(Gln) + L-glutamine + ATP + H2O = L-glutaminyl-tRNA(Gln) + L-glutamate + ADP + phosphate + H(+). In terms of biological role, allows the formation of correctly charged Gln-tRNA(Gln) through the transamidation of misacylated Glu-tRNA(Gln) in organisms which lack glutaminyl-tRNA synthetase. The reaction takes place in the presence of glutamine and ATP through an activated gamma-phospho-Glu-tRNA(Gln). This Chlamydia abortus (strain DSM 27085 / S26/3) (Chlamydophila abortus) protein is Glutamyl-tRNA(Gln) amidotransferase subunit A.